We begin with the raw amino-acid sequence, 259 residues long: Haloacid dehalogenase-like hydrolase domain-containing protein 2 (259 aa).

Mg(2+)-binding residues include Asp-13 and Asn-15. Substrate is bound by residues 13–15 (DLN) and 46–47 (TN). A coiled-coil region spans residues 47-72 (NTTKESKKDLLERLKKLEFEISEDEI). Lys-50 is modified (N6-succinyllysine). Lys-179 provides a ligand contact to substrate. Asp-204 provides a ligand contact to Mg(2+).

Belongs to the HAD-like hydrolase superfamily. It depends on Mg(2+) as a cofactor.

The sequence is that of Haloacid dehalogenase-like hydrolase domain-containing protein 2 (Hdhd2) from Mus musculus (Mouse).